The sequence spans 701 residues: Reverse gyrase subunit A (701 aa).

Positions 41-197 constitute a Toprim domain; that stretch reads MVLFIVESPN…NIYRAEFHEV (157 aa). E47 provides a ligand contact to Mg(2+). An RG C-terminal-type zinc finger spans residues 117-143; the sequence is IKKCLDCGHQFVDEDKCPRCGSENIDD. Positions 120, 123, 133, and 136 each coordinate Zn(2+). A Mg(2+)-binding site is contributed by D166. The Topo IA-type catalytic domain occupies 213 to 602; the sequence is NTNRVKAQLV…SFKKELIEIW (390 aa). Y352 (O-(5'-phospho-DNA)-tyrosine intermediate) is an active-site residue.

It belongs to the type IA topoisomerase family. As to quaternary structure, heterodimer of an RgyA and RgyB subunit. Zn(2+) is required as a cofactor. Mg(2+) serves as cofactor.

Its subcellular location is the cytoplasm. Functionally, modifies the topological state of DNA by introducing positive supercoils in an ATP-dependent process. Binds to single-stranded DNA, transiently cleaves and then rejoins the end, introducing a positive supercoil in the process. The scissile phosphodiester is attacked by the catalytic tyrosine of the enzyme, resulting in the formation of a DNA-(5'-phosphotyrosyl)-enzyme intermediate. Probably involved in rewinding DNA strands in regions of the chromosome that have opened up to allow replication, transcription, DNA repair or for DNA protection. Reconstituted holoenzyme binds dsDNA a bit better than ssDNA, this subunit preferentially binds ssDNA. In isolation this subunit relaxes negatively-supercoiled DNA, and stimulates the endogenous ATPase activity of the RgyB subunit. This chain is Reverse gyrase subunit A, found in Nanoarchaeum equitans (strain Kin4-M).